We begin with the raw amino-acid sequence, 471 residues long: Cysteine--tRNA ligase (471 aa).

Cys30 lines the Zn(2+) pocket. Residues 32-42 (PTVYNFAHIGN) carry the 'HIGH' region motif. Residues Cys212, His237, and Glu241 each coordinate Zn(2+). The short motif at 270 to 274 (KMSKS) is the 'KMSKS' region element. Position 273 (Lys273) interacts with ATP.

It belongs to the class-I aminoacyl-tRNA synthetase family. In terms of assembly, monomer. The cofactor is Zn(2+).

It localises to the cytoplasm. It carries out the reaction tRNA(Cys) + L-cysteine + ATP = L-cysteinyl-tRNA(Cys) + AMP + diphosphate. This is Cysteine--tRNA ligase from Leptospira interrogans serogroup Icterohaemorrhagiae serovar Lai (strain 56601).